Consider the following 312-residue polypeptide: HTH-type transcriptional regulator PtxR (312 aa).

In terms of domain architecture, HTH lysR-type spans leucine 11–threonine 68. Residues phenylalanine 28 to arginine 47 constitute a DNA-binding region (H-T-H motif).

Belongs to the LysR transcriptional regulatory family. In terms of assembly, monomer in solution. May dimerize on binding to DNA. Interacts with PtxS in the absence of 2-ketogluconate. Binding of the 2-ketogluconate effector to PtxS causes PtxS/PtxR complex dissociation.

Its activity is regulated as follows. Negatively regulated by PtxS, which interacts with PtxR and prevents its activity. Functionally, plays an important role in the regulation of the production of the virulence factor exotoxin A (toxA), via positive regulation of the transcription of the toxA gene. Acts by binding directly to the toxA promoter region. Besides toxA, PtxR modulates the expression of genes that code for the QS-controlled virulence factors. It negatively regulates the expression of the rhamnolipid and pyocyanine genes, through the autoinducer synthase RhlI, and the PQS synthesis operon pqsABCDE, while it positively regulates the expression of lasB through the autoinducer synthase LasI. Also positively regulates the expression of the exotoxin A regulatory protein (toxR or regA). In addition, is involved in the positive regulation of glucose metabolism via the regulation of the expression of the kgu and gad operons. Acts by binding directly to the promoter region of the kgu and gad operons. The polypeptide is HTH-type transcriptional regulator PtxR (Pseudomonas aeruginosa (strain ATCC 15692 / DSM 22644 / CIP 104116 / JCM 14847 / LMG 12228 / 1C / PRS 101 / PAO1)).